Reading from the N-terminus, the 77-residue chain is P fimbrial regulatory protein KS71A (77 aa).

This Escherichia coli protein is P fimbrial regulatory protein KS71A (KS71A).